The primary structure comprises 175 residues: Large ribosomal subunit protein uL10 (175 aa).

The protein belongs to the universal ribosomal protein uL10 family. As to quaternary structure, part of the ribosomal stalk of the 50S ribosomal subunit. The N-terminus interacts with L11 and the large rRNA to form the base of the stalk. The C-terminus forms an elongated spine to which L12 dimers bind in a sequential fashion forming a multimeric L10(L12)X complex.

In terms of biological role, forms part of the ribosomal stalk, playing a central role in the interaction of the ribosome with GTP-bound translation factors. This Prochlorococcus marinus (strain NATL2A) protein is Large ribosomal subunit protein uL10.